The following is a 583-amino-acid chain: Phosphoglucomutase, cytoplasmic 2 (583 aa).

Alpha-D-glucose 1,6-bisphosphate-binding residues include arginine 25 and serine 124. The active-site Phosphoserine intermediate is serine 124. Mg(2+) is bound by residues serine 124, aspartate 300, aspartate 302, and aspartate 304. Serine 124 carries the phosphoserine modification. 6 residues coordinate alpha-D-glucose 1,6-bisphosphate: aspartate 304, arginine 305, threonine 368, glutamate 387, serine 389, and lysine 400.

This sequence belongs to the phosphohexose mutase family. In terms of assembly, monomer. It depends on Mg(2+) as a cofactor.

It localises to the cytoplasm. The catalysed reaction is alpha-D-glucose 1-phosphate = alpha-D-glucose 6-phosphate. It carries out the reaction O-phospho-L-seryl-[protein] + alpha-D-glucose 1-phosphate = alpha-D-glucose 1,6-bisphosphate + L-seryl-[protein]. The enzyme catalyses alpha-D-glucose 1,6-bisphosphate + L-seryl-[protein] = O-phospho-L-seryl-[protein] + alpha-D-glucose 6-phosphate. Catalyzes the reversible isomerization of alpha-D-glucose 1-phosphate to alpha-D-glucose 6-phosphate. The mechanism proceeds via the intermediate compound alpha-D-glucose 1,6-bisphosphate. This enzyme participates in both the breakdown and synthesis of glucose. The sequence is that of Phosphoglucomutase, cytoplasmic 2 from Zea mays (Maize).